Here is a 338-residue protein sequence, read N- to C-terminus: Aspartate carbamoyltransferase catalytic subunit (338 aa).

Carbamoyl phosphate contacts are provided by arginine 59 and threonine 60. Residue lysine 87 coordinates L-aspartate. Carbamoyl phosphate is bound by residues arginine 109, histidine 142, and glutamine 145. Residues arginine 182 and arginine 253 each contribute to the L-aspartate site. Residues glycine 294 and proline 295 each coordinate carbamoyl phosphate.

This sequence belongs to the aspartate/ornithine carbamoyltransferase superfamily. ATCase family. Heterododecamer (2C3:3R2) of six catalytic PyrB chains organized as two trimers (C3), and six regulatory PyrI chains organized as three dimers (R2).

The catalysed reaction is carbamoyl phosphate + L-aspartate = N-carbamoyl-L-aspartate + phosphate + H(+). It participates in pyrimidine metabolism; UMP biosynthesis via de novo pathway; (S)-dihydroorotate from bicarbonate: step 2/3. Catalyzes the condensation of carbamoyl phosphate and aspartate to form carbamoyl aspartate and inorganic phosphate, the committed step in the de novo pyrimidine nucleotide biosynthesis pathway. This chain is Aspartate carbamoyltransferase catalytic subunit, found in Prochlorococcus marinus subsp. pastoris (strain CCMP1986 / NIES-2087 / MED4).